The sequence spans 333 residues: DNA-directed RNA polymerase subunit alpha (333 aa).

Residues 1–235 (MQTNLLKPKA…EQLAVFAQLE (235 aa)) are alpha N-terminal domain (alpha-NTD). The interval 253-333 (FDPILLRPVD…NWPPQGLDKR (81 aa)) is alpha C-terminal domain (alpha-CTD).

The protein belongs to the RNA polymerase alpha chain family. As to quaternary structure, homodimer. The RNAP catalytic core consists of 2 alpha, 1 beta, 1 beta' and 1 omega subunit. When a sigma factor is associated with the core the holoenzyme is formed, which can initiate transcription.

The catalysed reaction is RNA(n) + a ribonucleoside 5'-triphosphate = RNA(n+1) + diphosphate. In terms of biological role, DNA-dependent RNA polymerase catalyzes the transcription of DNA into RNA using the four ribonucleoside triphosphates as substrates. The sequence is that of DNA-directed RNA polymerase subunit alpha from Methylibium petroleiphilum (strain ATCC BAA-1232 / LMG 22953 / PM1).